The chain runs to 418 residues: Imidazolonepropionase (418 aa).

Residues His-79 and His-81 each contribute to the Fe(3+) site. Zn(2+) contacts are provided by His-79 and His-81. 4-imidazolone-5-propanoate-binding residues include Arg-88, Tyr-151, and His-184. Position 151 (Tyr-151) interacts with N-formimidoyl-L-glutamate. Residue His-249 participates in Fe(3+) binding. Residue His-249 coordinates Zn(2+). Position 252 (Gln-252) interacts with 4-imidazolone-5-propanoate. Position 324 (Asp-324) interacts with Fe(3+). Zn(2+) is bound at residue Asp-324. N-formimidoyl-L-glutamate is bound by residues Asn-326 and Gly-328. Thr-329 is a 4-imidazolone-5-propanoate binding site.

This sequence belongs to the metallo-dependent hydrolases superfamily. HutI family. Zn(2+) serves as cofactor. The cofactor is Fe(3+).

It is found in the cytoplasm. It catalyses the reaction 4-imidazolone-5-propanoate + H2O = N-formimidoyl-L-glutamate. It participates in amino-acid degradation; L-histidine degradation into L-glutamate; N-formimidoyl-L-glutamate from L-histidine: step 3/3. In terms of biological role, catalyzes the hydrolytic cleavage of the carbon-nitrogen bond in imidazolone-5-propanoate to yield N-formimidoyl-L-glutamate. It is the third step in the universal histidine degradation pathway. The sequence is that of Imidazolonepropionase from Colwellia psychrerythraea (strain 34H / ATCC BAA-681) (Vibrio psychroerythus).